The following is a 55-amino-acid chain: Large ribosomal subunit protein bL33 (55 aa).

Belongs to the bacterial ribosomal protein bL33 family.

This Mycobacterium leprae (strain Br4923) protein is Large ribosomal subunit protein bL33.